Consider the following 376-residue polypeptide: Nuclear egress protein 1 (376 aa).

Phosphoserine is present on S19. The interval R22–P57 is disordered. Over residues V33–N45 the composition is skewed to polar residues. Residues C106–H211 form a CCCH-type zinc finger. The segment at V316–P376 is disordered. Positions V317–P332 are enriched in polar residues.

This sequence belongs to the herpesviridae NEC1 protein family. In terms of assembly, forms a heterohexameric complex with NEC2. Interacts with capsid vertex specific component 2/CVC2; this interaction directs the capsid to the host inner nuclear membrane to initiate budding. Post-translationally, phosphorylated at serine residues in the N-terminus. This phosphorylation regulates the localization within the inner nuclear membrane. Phosphorylation by viral kinase UL97 at Ser-19 plays an important role for correct viral nuclear egress complex (NEC) localization.

It is found in the host nucleus inner membrane. In terms of biological role, plays an essential role in virion nuclear egress, the first step of virion release from infected cell. Within the host nucleus, NEC1 interacts with the newly formed capsid through the vertexes and directs it to the inner nuclear membrane by associating with NEC2. Induces the budding of the capsid at the inner nuclear membrane as well as its envelopment into the perinuclear space. There, the NEC1/NEC2 complex promotes the fusion of the enveloped capsid with the outer nuclear membrane and the subsequent release of the viral capsid into the cytoplasm where it will reach the secondary budding sites in the host Golgi or trans-Golgi network. This chain is Nuclear egress protein 1, found in Homo sapiens (Human).